Reading from the N-terminus, the 355-residue chain is UDP-glucose 4-epimerase uge1 (355 aa).

8–39 (TVLVTGGAGYIGSHTCVVLLEKGYDVVIVDNL) serves as a coordination point for NAD(+).

Belongs to the NAD(P)-dependent epimerase/dehydratase family. It depends on NAD(+) as a cofactor.

The enzyme catalyses UDP-alpha-D-glucose = UDP-alpha-D-galactose. It participates in carbohydrate metabolism; galactose metabolism. Its function is as follows. Major UDP-glucose/-galactose 4-epimerase under glucose-rich conditions involved in protein galactosylation. This Schizosaccharomyces pombe (strain 972 / ATCC 24843) (Fission yeast) protein is UDP-glucose 4-epimerase uge1 (uge1).